The chain runs to 227 residues: Isoprenyl transferase (227 aa).

The active site involves aspartate 13. Aspartate 13 lines the Mg(2+) pocket. Substrate-binding positions include 14–17 (GNGR), tryptophan 18, arginine 26, histidine 30, and 58–60 (STE). Asparagine 61 functions as the Proton acceptor in the catalytic mechanism. Residues tryptophan 62, arginine 64, arginine 175, and 181-183 (RLS) each bind substrate. Glutamate 194 is a Mg(2+) binding site.

The protein belongs to the UPP synthase family. In terms of assembly, homodimer. The cofactor is Mg(2+).

Functionally, catalyzes the condensation of isopentenyl diphosphate (IPP) with allylic pyrophosphates generating different type of terpenoids. The protein is Isoprenyl transferase of Treponema denticola (strain ATCC 35405 / DSM 14222 / CIP 103919 / JCM 8153 / KCTC 15104).